A 109-amino-acid chain; its full sequence is Nucleoid-associated protein VV2410 (109 aa).

Positions 1–22 are disordered; that stretch reads MFGKGGMGNLMKQAQQMQERMQ.

It belongs to the YbaB/EbfC family. In terms of assembly, homodimer.

It is found in the cytoplasm. The protein localises to the nucleoid. Functionally, binds to DNA and alters its conformation. May be involved in regulation of gene expression, nucleoid organization and DNA protection. This is Nucleoid-associated protein VV2410 from Vibrio vulnificus (strain YJ016).